Reading from the N-terminus, the 416-residue chain is Lipid phosphate phosphatase delta (416 aa).

2 helical membrane passes run 72–92 and 104–124; these read FFSG…LPLL and MTLL…VVSA. The segment at 119-127 is phosphatase sequence motif I; the sequence is KDVVSAPRP. The phosphatase sequence motif II stretch occupies residues 151–154; the sequence is PSSH. Histidine 154 serves as the catalytic Proton donor. A helical membrane pass occupies residues 178 to 198; it reads VSIQYYGFALACLLVALIAFG. Positions 198 to 209 are phosphatase sequence motif III; the sequence is GRVYLGMHSVVD. The active-site Nucleophile is histidine 205. 5 helical membrane-spanning segments follow: residues 207 to 227, 241 to 261, 266 to 286, 302 to 322, and 393 to 413; these read VVDI…WLTV, VSSF…TPEH, YEYH…VQQT, ELPI…ILLV, and FFQY…LFSY.

The protein belongs to the type 2 lipid phosphate phosphatase family.

It is found in the endoplasmic reticulum membrane. Its function is as follows. Functions as a sphingoid long-chain base phosphate (LCBP) phosphatase. May play a role in the regulation of LCBP levels and be involved in stomatal responses through LCBP-mediated ABA signaling. The chain is Lipid phosphate phosphatase delta (LPPD) from Arabidopsis thaliana (Mouse-ear cress).